The chain runs to 279 residues: MAVKRIKNHSSGKRQTVVVDYKSILTTSKPEKSLLVTLPKKAGRNNQGKITIRHHGGGHKRKYRIIDFKRNKDNIYGTIKSIEYDPNRTSFISLVVYADGEKRYIIAPKGIKVGDKIISGNENIDILLGNSLPLEFIPEDTLVHNIELSPNAGGQITRSAGASAQILGFDETKKYILVKLNSGEVRKFRKECRATIGTVSNDEHILENLGKAGKSRHLGVRPTVRGSAMNPNDHPHGGGEGRSPVGMDAPRTPWGKRHMGVKTRNNKKSSTSMIVRRRK.

The disordered stretch occupies residues 223–279 (TVRGSAMNPNDHPHGGGEGRSPVGMDAPRTPWGKRHMGVKTRNNKKSSTSMIVRRRK). Basic residues predominate over residues 254–267 (WGKRHMGVKTRNNK).

The protein belongs to the universal ribosomal protein uL2 family. In terms of assembly, part of the 50S ribosomal subunit. Forms a bridge to the 30S subunit in the 70S ribosome.

In terms of biological role, one of the primary rRNA binding proteins. Required for association of the 30S and 50S subunits to form the 70S ribosome, for tRNA binding and peptide bond formation. It has been suggested to have peptidyltransferase activity; this is somewhat controversial. Makes several contacts with the 16S rRNA in the 70S ribosome. The sequence is that of Large ribosomal subunit protein uL2 from Ureaplasma urealyticum serovar 10 (strain ATCC 33699 / Western).